Here is a 767-residue protein sequence, read N- to C-terminus: DNA topoisomerase 1 (767 aa).

Residues 1–23 (MSGDHLHNDSQIEADFRLNDSHK) are compositionally biased toward basic and acidic residues. The segment at 1 to 201 (MSGDHLHNDS…NKKKKPKKEE (201 aa)) is disordered. The residue at position 2 (Ser-2) is an N-acetylserine. A phosphoserine mark is found at Ser-2 and Ser-10. Residues 24–39 (HKDKHKDREHRHKEHK) are compositionally biased toward basic residues. Residues 40–110 (KDKEKDREKS…DAKIKKEKEN (71 aa)) are compositionally biased toward basic and acidic residues. Ser-59 bears the Phosphoserine mark. Lys-103 is covalently cross-linked (Glycyl lysine isopeptide (Lys-Gly) (interchain with G-Cter in SUMO2)). A Glycyl lysine isopeptide (Lys-Gly) (interchain with G-Cter in SUMO); alternate cross-link involves residue Lys-105. Lys-105 is covalently cross-linked (Glycyl lysine isopeptide (Lys-Gly) (interchain with G-Cter in SUMO2); alternate). Ser-114 is modified (phosphoserine). Lys-119 participates in a covalent cross-link: Glycyl lysine isopeptide (Lys-Gly) (interchain with G-Cter in SUMO); alternate. A Glycyl lysine isopeptide (Lys-Gly) (interchain with G-Cter in SUMO2); alternate cross-link involves residue Lys-119. A Glycyl lysine isopeptide (Lys-Gly) (interchain with G-Cter in SUMO1); alternate cross-link involves residue Lys-119. Residues 131 to 168 (PKEDIKPLKRPRDEDDADYKPKKIKTEDIKKEKKRKLE) are compositionally biased toward basic and acidic residues. Glycyl lysine isopeptide (Lys-Gly) (interchain with G-Cter in SUMO2) cross-links involve residues Lys-136 and Lys-150. Residue Lys-155 forms a Glycyl lysine isopeptide (Lys-Gly) (interchain with G-Cter in SUMO); alternate linkage. Residue Lys-155 forms a Glycyl lysine isopeptide (Lys-Gly) (interchain with G-Cter in SUMO2); alternate linkage. Residues Lys-160 and Lys-166 each participate in a glycyl lysine isopeptide (Lys-Gly) (interchain with G-Cter in SUMO2) cross-link. Residue Lys-174 forms a Glycyl lysine isopeptide (Lys-Gly) (interchain with G-Cter in SUMO2); alternate linkage. At Lys-174 the chain carries N6-acetyllysine; alternate. Over residues 181–201 (KDKDKKGAESDNKKKKPKKEE) the composition is skewed to basic and acidic residues. A Glycyl lysine isopeptide (Lys-Gly) (interchain with G-Cter in SUMO2) cross-link involves residue Lys-206. N6-acetyllysine is present on Lys-282. Residue Lys-338 forms a Glycyl lysine isopeptide (Lys-Gly) (interchain with G-Cter in SUMO2) linkage. 2 interaction with DNA regions span residues 427–428 (KY) and 490–495 (RAGNEK). The 334-residue stretch at 434-767 (SSRIKGEKDW…IDMTDEDYEF (334 aa)) folds into the Topo IB-type catalytic domain. Position 508 is a phosphoserine; by CK2 (Ser-508). Lys-551 is covalently cross-linked (Glycyl lysine isopeptide (Lys-Gly) (interchain with G-Cter in SUMO2)). Residues 587 to 589 (TAK) form an interaction with DNA region. Residues Lys-644, Lys-702, and Lys-714 each participate in a glycyl lysine isopeptide (Lys-Gly) (interchain with G-Cter in SUMO2) cross-link. Tyr-725 serves as the catalytic O-(3'-phospho-DNA)-tyrosine intermediate.

It belongs to the type IB topoisomerase family. As to quaternary structure, monomer. Interacts with ERCC6. Interacts with TPRN; TPRN interacts with a number of DNA damage response proteins, is recruited to sites of DNA damage and may play a role in DNA damage repair. Post-translationally, sumoylated. Lys-119 is the main site of sumoylation. Sumoylation plays a role in partitioning TOP1 between nucleoli and nucleoplasm. Levels are dramatically increased on camptothecin (CPT) treatment. In terms of processing, phosphorylation at Ser-508 by CK2 increases binding to supercoiled DNA and sensitivity to camptothecin.

It localises to the nucleus. Its subcellular location is the nucleolus. The protein localises to the nucleoplasm. It catalyses the reaction ATP-independent breakage of single-stranded DNA, followed by passage and rejoining.. With respect to regulation, specifically inhibited by camptothecin (CPT), a plant alkaloid with antitumor activity. Its function is as follows. Releases the supercoiling and torsional tension of DNA introduced during the DNA replication and transcription by transiently cleaving and rejoining one strand of the DNA duplex. Introduces a single-strand break via transesterification at a target site in duplex DNA. The scissile phosphodiester is attacked by the catalytic tyrosine of the enzyme, resulting in the formation of a DNA-(3'-phosphotyrosyl)-enzyme intermediate and the expulsion of a 5'-OH DNA strand. The free DNA strand then rotates around the intact phosphodiester bond on the opposing strand, thus removing DNA supercoils. Finally, in the religation step, the DNA 5'-OH attacks the covalent intermediate to expel the active-site tyrosine and restore the DNA phosphodiester backbone. Regulates the alternative splicing of tissue factor (F3) pre-mRNA in endothelial cells. Involved in the circadian transcription of the core circadian clock component BMAL1 by altering the chromatin structure around the ROR response elements (ROREs) on the BMAL1 promoter. The sequence is that of DNA topoisomerase 1 (TOP1) from Cricetulus griseus (Chinese hamster).